Here is a 162-residue protein sequence, read N- to C-terminus: MSAPRKVRLPSVKAVDMSMEDMAARLARLESENKALKQQVLRGGACASSTSVPSAPVPPPEPLTARQREVMITQATGRLASQAMKKIEDKVRKSVDGVTTRNEMENILQNLTLRIQVSMLGAKGQPSPGEGTRLRESNDPNATRRARSRSRGREAKKVQISD.

The stretch at Val12–Gly43 forms a coiled coil. Positions Gly121–Asp162 are disordered. Residues Arg151–Asp162 are compositionally biased toward basic and acidic residues.

This sequence belongs to the herpesviridae BLRF2 family. As to quaternary structure, homooligomer; homooligomerizes and binds double-stranded DNA (dsDNA) cooperatively. Interacts with host CGAS.

It localises to the virion tegument. Its subcellular location is the host cytoplasm. Plays a role in the inhibition of host innate immune system by targeting the CGAS enzymatic activity which is the principal cytosolic DNA sensor that detects invading viral DNA. Acts by inhibiting CGAS-DNA phase separation: directly binds double-stranded DNA (dsDNA) in a length dependent but sequence independent manner and is able to form DNA-induced phase separation in infected cells. DNA phase separation of ORF52 mediates disruption of liquid-like droplets in which CGAS is activated, thereby preventing CGAS activity. The protein is Tegument protein BLRF2 of Epstein-Barr virus (strain GD1) (HHV-4).